Consider the following 391-residue polypeptide: Choline/ethanolaminephosphotransferase 1 (391 aa).

Over 1-49 (MGYFVPDSHIENLKSYKYQSEDRSLVSKYFLKPFWQRFCHIFPTWMAPN) the chain is Lumenal. A helical membrane pass occupies residues 50 to 69 (IITLSGFAFIVINVLTVFYY). Over 70 to 172 (DPNLNTDTPR…YHTHTLYLSE (103 aa)) the chain is Cytoplasmic. Residues 173–193 (FSGPVEGILIVCVSLILTGIY) traverse the membrane as a helical segment. The Lumenal portion of the chain corresponds to 194 to 211 (GKQVIWHTYLFTITVGDK). Residues 212–232 (VIDVDTLDIVFSLAVFGLVMN) traverse the membrane as a helical segment. Over 233-264 (ALSAKRNVDKYYRNSTSSANNITQIEQDSAIK) the chain is Cytoplasmic. A helical membrane pass occupies residues 265-282 (GLLPFFAYYASIALLVWM). The Lumenal portion of the chain corresponds to 283-285 (QPS). Residues 286–308 (FITLSFILSVGFTGAFTVGRIIV) traverse the membrane as a helical segment. At 309-321 (CHLTKQSFPMFNA) the chain is on the cytoplasmic side. The helical transmembrane segment at 322-342 (PMLIPLCQIVLYKICLSLWGI) threads the bilayer. Residues 343-346 (ESNK) lie on the Lumenal side of the membrane. A helical transmembrane segment spans residues 347–367 (IVFALSWLGFGLSLGVHIMFM). Residues 368-391 (NDIIHEFTEYLDVYALSIKRSKLT) are Cytoplasmic-facing.

This sequence belongs to the CDP-alcohol phosphatidyltransferase class-I family. Mg(2+) serves as cofactor.

Its subcellular location is the golgi apparatus membrane. The enzyme catalyses CDP-ethanolamine + a 1,2-diacyl-sn-glycerol = a 1,2-diacyl-sn-glycero-3-phosphoethanolamine + CMP + H(+). It carries out the reaction CDP-choline + a 1,2-diacyl-sn-glycerol = a 1,2-diacyl-sn-glycero-3-phosphocholine + CMP + H(+). The catalysed reaction is CDP-N-methylethanolamine + a 1,2-diacyl-sn-glycerol = a 1,2-diacyl-sn-glycero-3-phospho-N-methylethanolamine + CMP + H(+). It catalyses the reaction CDP-N,N-dimethylethanolamine + a 1,2-diacyl-sn-glycerol = a 1,2-diacyl-sn-glycero-3-phospho-N,N-dimethylethanolamine + CMP + H(+). The enzyme catalyses 1,2-di-(9Z-octadecenoyl)-glycerol + CDP-choline = 1,2-di-(9Z-octadecenoyl)-sn-glycero-3-phosphocholine + CMP + H(+). It carries out the reaction 1,2-di-(9Z-octadecenoyl)-glycerol + CDP-ethanolamine = 1,2-di-(9Z-octadecenoyl)-sn-glycero-3-phosphoethanolamine + CMP + H(+). Its pathway is phospholipid metabolism; phosphatidylethanolamine biosynthesis; phosphatidylethanolamine from ethanolamine: step 3/3. It participates in phospholipid metabolism; phosphatidylcholine biosynthesis; phosphatidylcholine from phosphocholine: step 2/2. With respect to regulation, requires a divalent cation activator, and is inhibited by CMP. Activated by phospholipids, especially phosphatidylcholine. Its function is as follows. Catalyzes the final step in the CDP-ethanolamine route leading to phosphatidylethanolamine (PE). Can also catalyze the formation of phosphatidylcholine (PC) from CDP-choline, but does not substantially contribute to PC biosynthesis. Preferentially uses CDP-dimethylethanolamine and CDP-propanolamine as aminoalcohol substrates. Shows highest activity toward di-unsaturated diacylglycerol species as lipid substrates. The CDP-ethanolamine pathway may play a role in maintaining the proper PE species distribution. The sequence is that of Choline/ethanolaminephosphotransferase 1 (EPT1) from Saccharomyces cerevisiae (strain ATCC 204508 / S288c) (Baker's yeast).